The primary structure comprises 70 residues: Protein SlyX homolog (70 aa).

Belongs to the SlyX family.

The sequence is that of Protein SlyX homolog from Shewanella baltica (strain OS155 / ATCC BAA-1091).